A 455-amino-acid chain; its full sequence is Argininosuccinate lyase (455 aa).

It belongs to the lyase 1 family. Argininosuccinate lyase subfamily.

It localises to the cytoplasm. It carries out the reaction 2-(N(omega)-L-arginino)succinate = fumarate + L-arginine. It functions in the pathway amino-acid biosynthesis; L-arginine biosynthesis; L-arginine from L-ornithine and carbamoyl phosphate: step 3/3. This is Argininosuccinate lyase from Shewanella halifaxensis (strain HAW-EB4).